The following is a 327-amino-acid chain: Undecaprenyl-phosphate 4-deoxy-4-formamido-L-arabinose transferase (327 aa).

2 helical membrane passes run 236–256 and 270–290; these read LSVFGSIIAVLGFTLSVLLVV and VFMLFAVLFMFIGAQFVAMGL.

It belongs to the glycosyltransferase 2 family.

The protein resides in the cell inner membrane. It catalyses the reaction UDP-4-deoxy-4-formamido-beta-L-arabinose + di-trans,octa-cis-undecaprenyl phosphate = 4-deoxy-4-formamido-alpha-L-arabinopyranosyl di-trans,octa-cis-undecaprenyl phosphate + UDP. It functions in the pathway glycolipid biosynthesis; 4-amino-4-deoxy-alpha-L-arabinose undecaprenyl phosphate biosynthesis; 4-amino-4-deoxy-alpha-L-arabinose undecaprenyl phosphate from UDP-4-deoxy-4-formamido-beta-L-arabinose and undecaprenyl phosphate: step 1/2. Its pathway is bacterial outer membrane biogenesis; lipopolysaccharide biosynthesis. Catalyzes the transfer of 4-deoxy-4-formamido-L-arabinose from UDP to undecaprenyl phosphate. The modified arabinose is attached to lipid A and is required for resistance to polymyxin and cationic antimicrobial peptides. This Enterobacter sp. (strain 638) protein is Undecaprenyl-phosphate 4-deoxy-4-formamido-L-arabinose transferase.